The sequence spans 137 residues: MLQPKRTKFRKVQKGRNRGLAHRGSKVSFGEYGLKATGRGRITARQIEAGRRAITRHVKRGGKIWIRVFPDKPITEKPLEVRMGKGKGSVEYWVAQIQPGKVLYEIEGVSEELAREAFDLAAQKFPVSTTFVKRTVM.

The interval 1–22 (MLQPKRTKFRKVQKGRNRGLAH) is disordered.

The protein belongs to the universal ribosomal protein uL16 family. Part of the 50S ribosomal subunit.

Binds 23S rRNA and is also seen to make contacts with the A and possibly P site tRNAs. In Chromohalobacter salexigens (strain ATCC BAA-138 / DSM 3043 / CIP 106854 / NCIMB 13768 / 1H11), this protein is Large ribosomal subunit protein uL16.